The following is an 800-amino-acid chain: Protein MICRORCHIDIA 4 (800 aa).

2 disordered regions span residues 1-76 (MEPI…ARSD) and 552-702 (AKRQ…RTLS). The segment covering 9 to 18 (NPVTTSTLST) has biased composition (polar residues). Low complexity predominate over residues 36–47 (ELSSSNEGSELG). 2 stretches are compositionally biased toward basic and acidic residues: residues 559 to 578 (SAKD…EFDP) and 628 to 641 (VSKD…EKGG). Positions 666–675 (NSDDDYDCDS) are enriched in acidic residues. The stretch at 699-766 (RTLSQLEQEN…QASLIDVFAE (68 aa)) forms a coiled coil. 2 consecutive short sequence motifs (nuclear localization signal) follow at residues 716–723 (DKKEEVFL) and 735–742 (LRKTLEAE).

Belongs to the MORC ATPase protein family. In terms of assembly, homodimer and heterodimer. Component of an RNA-directed DNA methylation (RdDM) complex. Forms homomeric complexes. It depends on Mg(2+) as a cofactor. Requires Mn(2+) as cofactor.

Its subcellular location is the nucleus. Functionally, exhibits ATPase activity. Binds DNA/RNA in a non-specific manner and exhibits endonuclease activity. Probably involved in DNA repair. Involved in RNA-directed DNA methylation (RdDM) as a component of the RdDM machinery and required for gene silencing. May also be involved in the regulation of chromatin architecture to maintain gene silencing. Together with MORC7, acts to suppress a wide set of non-methylated protein-coding genes, especially involved in pathogen response. Positive regulator of defense against the oomycete Hyaloperonospora arabidopsidis (Hpa). This is Protein MICRORCHIDIA 4 from Arabidopsis thaliana (Mouse-ear cress).